The following is a 266-amino-acid chain: Undecaprenyl-diphosphatase (266 aa).

8 helical membrane-spanning segments follow: residues 2 to 22 (INIL…FLPI), 39 to 59 (LPII…IIYY), 86 to 106 (LKLI…GTFI), 112 to 132 (MFIL…ILML), 145 to 165 (ILLV…PGIS), 184 to 204 (AFEI…LFKY), 212 to 232 (MVLN…VGII), and 246 to 266 (LYYF…FFRI).

The protein belongs to the UppP family.

Its subcellular location is the cell inner membrane. It catalyses the reaction di-trans,octa-cis-undecaprenyl diphosphate + H2O = di-trans,octa-cis-undecaprenyl phosphate + phosphate + H(+). Its function is as follows. Catalyzes the dephosphorylation of undecaprenyl diphosphate (UPP). Confers resistance to bacitracin. This chain is Undecaprenyl-diphosphatase, found in Borrelia garinii subsp. bavariensis (strain ATCC BAA-2496 / DSM 23469 / PBi) (Borreliella bavariensis).